The following is a 410-amino-acid chain: MSLREEALHLHKVNQGKLESKSKVEVRNAKDLSLAYSPGVAEPCKDIHEDINKVYDYTMKGNMVAVVTDGTAVLGLGNIGPEAALPVMEGKAVLFKSFAGVDAFPIALNTNDVDKIVETVKLLEPTFGGVNLEDIAAPNCFIIEERLKKETNIPVFHDDQHGTAIVTVAGLVNALKLSGKSMSSIKVVANGAGAAGIAIIKLLHHYGVRDIVMCDSKGAIYEGRPNGMNDVKNEVAKFTNQDRKDGSLKDVIVDADVFIGVSVAGALTKEMVQSMAKDPIIFAMANPNPEIMPEDAREAGASVVGTGRSDFPNQVNNVLAFPGIFRGALDVRATHINEEMKIAAVEAIASLVSEDELSADYVIPAPFDKRVAPAVAKAVAKAAMETGVARITVDPEEVAEKTRKLTIIGE.

Catalysis depends on Tyr-36, which acts as the Proton donor. Catalysis depends on Lys-91, which acts as the Proton acceptor. A divalent metal cation is bound by residues Glu-133, Asp-134, and Asp-159. NADP(+) is bound by residues 192 to 195, Asn-286, and Asn-317; that span reads AGAA.

The protein belongs to the malic enzymes family. In terms of assembly, interacts with BrxC. Mg(2+) serves as cofactor. The cofactor is Mn(2+).

The catalysed reaction is (S)-malate + NADP(+) = pyruvate + CO2 + NADPH. It catalyses the reaction oxaloacetate + H(+) = pyruvate + CO2. The enzyme catalyses (S)-malate + H(+) = (S)-lactate + CO2. With respect to regulation, NADPH is a strong modulator that switches activity from a pyruvate-producing malic enzyme to a lactate-generating malolactic enzyme. In terms of biological role, bifunctional enzyme with both malic and malolactic enzyme activities. In the absence of NADPH, catalyzes the reversible decarboxylation of malate to pyruvate. Can use NAD and NADP, but with a very strong preference for NADP. In the presence of excess NADPH, catalyzes the non-oxidative decarboxylation of malate to lactate. During growth on glucose, contributes to NADPH balancing via oxidation of the NADPH produced in excess by other enzymatic reactions. Can also catalyze the decarboxylation of oxaloacetate. The polypeptide is Bifunctional malic/malolactic enzyme (ytsJ) (Bacillus subtilis (strain 168)).